Consider the following 268-residue polypeptide: Undecaprenyl-diphosphatase (268 aa).

A run of 7 helical transmembrane segments spans residues 7–27 (IFNA…PISS), 87–107 (LIYH…LCIY), 116–136 (FYSI…TEIS), 146–166 (IETP…WPGF), 187–207 (VEFS…LDVI), 210–230 (FYDI…SAFI), and 247–267 (SLIP…LFFM).

The protein belongs to the UppP family.

It is found in the cell membrane. The enzyme catalyses di-trans,octa-cis-undecaprenyl diphosphate + H2O = di-trans,octa-cis-undecaprenyl phosphate + phosphate + H(+). In terms of biological role, catalyzes the dephosphorylation of undecaprenyl diphosphate (UPP). Confers resistance to bacitracin. The sequence is that of Undecaprenyl-diphosphatase from Buchnera aphidicola subsp. Baizongia pistaciae (strain Bp).